A 1198-amino-acid polypeptide reads, in one-letter code: DNA polymerase II large subunit (1198 aa).

Disordered regions lie at residues 281–332 and 534–553; these read YKTG…PQKK and HWAETDGAQQTRPPDGAAES. Residues 286-319 show a composition bias toward acidic residues; sequence DTDEADADSDDGTDEDAADDSDIDDSSAGDEEAD.

This sequence belongs to the archaeal DNA polymerase II family. In terms of assembly, heterodimer of a large subunit and a small subunit.

It carries out the reaction DNA(n) + a 2'-deoxyribonucleoside 5'-triphosphate = DNA(n+1) + diphosphate. It catalyses the reaction Exonucleolytic cleavage in the 3'- to 5'-direction to yield nucleoside 5'-phosphates.. Functionally, possesses two activities: a DNA synthesis (polymerase) and an exonucleolytic activity that degrades single-stranded DNA in the 3'- to 5'-direction. Has a template-primer preference which is characteristic of a replicative DNA polymerase. The polypeptide is DNA polymerase II large subunit (Natronomonas pharaonis (strain ATCC 35678 / DSM 2160 / CIP 103997 / JCM 8858 / NBRC 14720 / NCIMB 2260 / Gabara) (Halobacterium pharaonis)).